The chain runs to 171 residues: RNA pyrophosphohydrolase (171 aa).

The region spanning 6–149 (GFRPNVGIIL…KREVYRRALK (144 aa)) is the Nudix hydrolase domain. The short motif at 39 to 60 (GGIKESESAEQALYRELQEEVG) is the Nudix box element.

The protein belongs to the Nudix hydrolase family. RppH subfamily. Requires a divalent metal cation as cofactor.

Accelerates the degradation of transcripts by removing pyrophosphate from the 5'-end of triphosphorylated RNA, leading to a more labile monophosphorylated state that can stimulate subsequent ribonuclease cleavage. The polypeptide is RNA pyrophosphohydrolase (Teredinibacter turnerae (strain ATCC 39867 / T7901)).